A 346-amino-acid chain; its full sequence is MLFDALLVLSFGGPEGPDQVMPFLENVTRGRGIPRERLASVAEHYLHFGGVSPINGINRALIGEIEAELGARGETLPVYFGNRNWDPYVEDAVTAMRDDGVRRAAVFATSAWGGYSSCTQYNEDIARGRAAAGDSAPQLVKLRHYFDHPLLVEMFAESIGVAAQSLPADLRDEARLLFTAHSIPVAADDRHGPNLYSRQVAYATRLVAAAAGYSEFDQVWQSRSGPPRIPWLEPDIGDHVAALAERGTKAVIICPIGFVADHIEVVWDLDSEVREQAADLGIAMARARTPNADRRYARLALDLVDELRGDRDPLRVAGVDPAPGCGYSVDGTTCADSPRCVARITG.

Fe-coproporphyrin III contacts are provided by serine 52 and tyrosine 121. Residues histidine 181 and glutamate 264 each coordinate Fe(2+).

This sequence belongs to the ferrochelatase family.

Its subcellular location is the cytoplasm. It carries out the reaction Fe-coproporphyrin III + 2 H(+) = coproporphyrin III + Fe(2+). It functions in the pathway porphyrin-containing compound metabolism; protoheme biosynthesis. Involved in coproporphyrin-dependent heme b biosynthesis. Catalyzes the insertion of ferrous iron into coproporphyrin III to form Fe-coproporphyrin III. In Mycobacterium sp. (strain JLS), this protein is Coproporphyrin III ferrochelatase.